A 780-amino-acid chain; its full sequence is WD repeat-containing protein 27 (780 aa).

WD repeat units follow at residues 3 to 56, 61 to 100, 111 to 150, 154 to 193, 200 to 236, 291 to 335, 342 to 385, 500 to 540, 544 to 582, 588 to 639, 644 to 685, 691 to 738, and 752 to 779; these read TPPE…VWSS, HQLL…MWNV, LTPR…VMDV, SVLV…VWDF, YSSS…IFSL, FPIL…LASF, HFKE…VLEI, NLSR…VFNA, GPPA…VWSV, MLLL…RYKP, KPIF…VFDL, AAVL…LWDL, and AFCT…LSQP.

The protein is WD repeat-containing protein 27 (Wdr27) of Mus musculus (Mouse).